Here is a 175-residue protein sequence, read N- to C-terminus: Endoribonuclease YbeY (175 aa).

Residues His-137, His-141, and His-147 each coordinate Zn(2+).

It belongs to the endoribonuclease YbeY family. It depends on Zn(2+) as a cofactor.

The protein localises to the cytoplasm. Single strand-specific metallo-endoribonuclease involved in late-stage 70S ribosome quality control and in maturation of the 3' terminus of the 16S rRNA. This Burkholderia ambifaria (strain ATCC BAA-244 / DSM 16087 / CCUG 44356 / LMG 19182 / AMMD) (Burkholderia cepacia (strain AMMD)) protein is Endoribonuclease YbeY.